A 521-amino-acid chain; its full sequence is GMP synthase [glutamine-hydrolyzing] (521 aa).

The Glutamine amidotransferase type-1 domain occupies 8 to 203 (KILILDFGAQ…VVDVCGCQTL (196 aa)). The active-site Nucleophile is Cys85. Active-site residues include His177 and Glu179. The region spanning 204-396 (WTAANIIDDQ…LGLPRTMVYR (193 aa)) is the GMPS ATP-PPase domain. 231-237 (SGGVDSS) is an ATP binding site.

Homodimer.

It catalyses the reaction XMP + L-glutamine + ATP + H2O = GMP + L-glutamate + AMP + diphosphate + 2 H(+). It functions in the pathway purine metabolism; GMP biosynthesis; GMP from XMP (L-Gln route): step 1/1. Its function is as follows. Catalyzes the synthesis of GMP from XMP. This Stenotrophomonas maltophilia (strain K279a) protein is GMP synthase [glutamine-hydrolyzing].